The chain runs to 226 residues: ATP-dependent dethiobiotin synthetase BioD (226 aa).

12–17 (GVGKTV) contacts ATP. Thr-16 lines the Mg(2+) pocket. The active site involves Lys-37. Thr-41 is a substrate binding site. ATP contacts are provided by residues Asp-49, 108–111 (EGAG), and 169–170 (GS). Mg(2+) contacts are provided by Asp-49 and Glu-108.

This sequence belongs to the dethiobiotin synthetase family. Homodimer. Mg(2+) is required as a cofactor.

It localises to the cytoplasm. The catalysed reaction is (7R,8S)-7,8-diammoniononanoate + CO2 + ATP = (4R,5S)-dethiobiotin + ADP + phosphate + 3 H(+). Its pathway is cofactor biosynthesis; biotin biosynthesis; biotin from 7,8-diaminononanoate: step 1/2. Functionally, catalyzes a mechanistically unusual reaction, the ATP-dependent insertion of CO2 between the N7 and N8 nitrogen atoms of 7,8-diaminopelargonic acid (DAPA, also called 7,8-diammoniononanoate) to form a ureido ring. The polypeptide is ATP-dependent dethiobiotin synthetase BioD (Mycobacterium marinum (strain ATCC BAA-535 / M)).